We begin with the raw amino-acid sequence, 184 residues long: MGLWDSLLNWLRSLFFKQEMELSLVGLQNAGKTSLVNAIATGGYSEDMIPTVGFNMRKVTKGNVTIKIWDLGGQRRFRTMWERYCRGVSAIVYVIDAADRDSVPISRSELNDLLTKPSLNGIPLLILGNKIDKSEALSKQALVDQLGLESVTDREVCCYMISCKDSINIDAVIDWLIKHSRTAT.

The segment at residues 1–18 is an intramembrane region (note=Mediates targeting to membranes); sequence MGLWDSLLNWLRSLFFKQ. GTP-binding positions include 29-34, 48-51, 70-74, and 129-132; these read NAGKTS, MIPT, DLGGQ, and NKID.

The protein belongs to the small GTPase superfamily. Arf family. Interacts with tubulin.

The protein localises to the late endosome membrane. It localises to the lysosome membrane. It is found in the cytoplasm. Its subcellular location is the cytoskeleton. The protein resides in the spindle. In terms of biological role, may play a role in lysosome motility. May play a role in chromosome segregation. Its function is as follows. (Microbial infection) Component of tomato mosaic virus (ToMV) RNA replication complexes. Required for tobamovirus multiplication, especially for efficient negative-strand RNA synthesis and viral RNA capping. This Arabidopsis thaliana (Mouse-ear cress) protein is ADP-ribosylation factor-like protein 8c.